The chain runs to 727 residues: MSVLPDRQVINQLISGHYGDPFSILGMHETSQGLQICALLPDAREVWLVETENGRRIAQLTLEDPRGFFIAQLTRRKKSFRYQFAVTWQENPQIIEDPYRFGPLLQDIDSWLLAEGTHLRPYERLGAHLMSLDGVSGVSFAVWAPNAQRVSVVGDFNFWDGRRHPMRLRRENGIWELFLPGIEAGQLYKFEIIDCHGQVRLKADPYAFEAQMRPETASLISPLPDVVKSSAARQKANDLCSPVSIYEVHLGSWRRHTDNNFWLSYRELADQLVEYVKYMGFTHVELLPINEHPFDGSWGYQPLGLYAPTRRYGTPEDFKAFVAKFHQAGINVILDWVPGHFPSDEHGLSTFDGTALYEYADPREGYHQDWNTLIYNYGRNEVRNYLAGNAFYWMERFGIDALRIDAVASMIYRDYSRAEGQWVPNYYGGRENLEAIAFLRYTNKTIGVERPGSVTMAEESTDFPGVTLPPDIGGLGFNYKWNMGWMHDTLNYMQCDPVHRKYHHNLMTFGMLYAYTENFILPLSHDEVVHGKRSILDRMPGDAWQKFANLRAYYAFMWAHPGKKLLFMGCEFAQGREWNFETSLDWHLLDDENGWHSGVQRLVRDLNHCYRQYAPLYEWDYQPAGFEWLVVDDHENSVFAFLRRDAEGHELIAISNFTPVPRYHYRVGIPQGGHYREVLNSDSAFYCGSNLGNQGGIDSHHVRSHNHEHSLLLTLPPLATIYLLREN.

Asp405 functions as the Nucleophile in the catalytic mechanism. Residue Glu458 is the Proton donor of the active site.

Belongs to the glycosyl hydrolase 13 family. GlgB subfamily. As to quaternary structure, monomer.

The catalysed reaction is Transfers a segment of a (1-&gt;4)-alpha-D-glucan chain to a primary hydroxy group in a similar glucan chain.. It functions in the pathway glycan biosynthesis; glycogen biosynthesis. Its function is as follows. Catalyzes the formation of the alpha-1,6-glucosidic linkages in glycogen by scission of a 1,4-alpha-linked oligosaccharide from growing alpha-1,4-glucan chains and the subsequent attachment of the oligosaccharide to the alpha-1,6 position. In Yersinia pestis bv. Antiqua (strain Antiqua), this protein is 1,4-alpha-glucan branching enzyme GlgB.